A 541-amino-acid chain; its full sequence is Glucans biosynthesis protein D (541 aa).

Residues 1 to 29 (MHRRNLLKASMAIAAYTGLSASGLLAAQA) constitute a signal peptide (tat-type signal).

It belongs to the OpgD/OpgG family. In terms of processing, predicted to be exported by the Tat system. The position of the signal peptide cleavage has not been experimentally proven.

The protein localises to the periplasm. Its pathway is glycan metabolism; osmoregulated periplasmic glucan (OPG) biosynthesis. Its function is as follows. Probably involved in the control of the structural glucose backbone of osmoregulated periplasmic glucans (OPGs). In Pseudomonas fluorescens (strain SBW25), this protein is Glucans biosynthesis protein D.